The chain runs to 244 residues: MSSEAERWLAAVVGNTHVRWGWFAGESLVKVEQFPAHQPLSWPEETELWLAAVGSAPLPPRSPWVHCLELSQVPLRDPYPSLGLDRALALWAAGIRYGWPCLVIDAGTALTLTGADAEGSLVGGAILPGLGLQAQALADHTARLPKVEWDPGAPIPPRWARNTGAAIRSGILHTLLAGLRDFLADWRRRFPQGPLLVTGGDGELLYPHLRPLDAELRWDPHLVLRGIAGCRQLHRVVRKPSGAE.

An ATP-binding site is contributed by 12–19; sequence VVGNTHVR. Residues tyrosine 79 and 83–86 contribute to the substrate site; that span reads GLDR. The Proton acceptor role is filled by aspartate 85. Aspartate 105 is a binding site for K(+). Threonine 108 is an ATP binding site. Threonine 163 serves as a coordination point for substrate.

The protein belongs to the type III pantothenate kinase family. In terms of assembly, homodimer. NH4(+) serves as cofactor. K(+) is required as a cofactor.

Its subcellular location is the cytoplasm. It catalyses the reaction (R)-pantothenate + ATP = (R)-4'-phosphopantothenate + ADP + H(+). The protein operates within cofactor biosynthesis; coenzyme A biosynthesis; CoA from (R)-pantothenate: step 1/5. Functionally, catalyzes the phosphorylation of pantothenate (Pan), the first step in CoA biosynthesis. The chain is Type III pantothenate kinase from Synechococcus sp. (strain JA-3-3Ab) (Cyanobacteria bacterium Yellowstone A-Prime).